Here is a 443-residue protein sequence, read N- to C-terminus: ATP-dependent protease ATPase subunit HslU (443 aa).

ATP-binding positions include Ile-18, 60–65, Asp-256, Glu-321, and Arg-393; that span reads GVGKTE.

It belongs to the ClpX chaperone family. HslU subfamily. In terms of assembly, a double ring-shaped homohexamer of HslV is capped on each side by a ring-shaped HslU homohexamer. The assembly of the HslU/HslV complex is dependent on binding of ATP.

The protein resides in the cytoplasm. Its function is as follows. ATPase subunit of a proteasome-like degradation complex; this subunit has chaperone activity. The binding of ATP and its subsequent hydrolysis by HslU are essential for unfolding of protein substrates subsequently hydrolyzed by HslV. HslU recognizes the N-terminal part of its protein substrates and unfolds these before they are guided to HslV for hydrolysis. This is ATP-dependent protease ATPase subunit HslU from Buchnera aphidicola subsp. Schizaphis graminum (strain Sg).